The sequence spans 391 residues: Ammonium transporter Amt1 (391 aa).

The next 10 helical transmembrane spans lie at 12 to 32 (VFFF…FIAL), 51 to 71 (LDLA…SYGF), 88 to 108 (AWWM…TGGV), 112 to 132 (IKIL…YPIV), 152 to 172 (AGSG…AYVL), 192 to 212 (IPIA…FNIG), 223 to 243 (LASV…GGAL), 261 to 281 (VAVC…VGLL), 305 to 325 (IGPV…IPFL), and 338 to 358 (GQII…LIIY).

Belongs to the ammonia transporter channel (TC 1.A.11.2) family. In terms of assembly, homotrimer. Interacts and forms a complex with GlnK1.

Its subcellular location is the cell membrane. Its activity is regulated as follows. Activity is regulated by the nitrogen regulatory protein GlnK1 via direct interaction. Formation of the GlnK1/Amt1 complex is decreased in the presence of Mg-ATP or 2-oxoglutarate. The presence of both effectors abolishes the formation of the complex. Its function is as follows. Involved in the uptake of ammonium/ammonia (NH(4)(+)/NH(3)). Transport is electrogenic. This chain is Ammonium transporter Amt1, found in Methanocaldococcus jannaschii (strain ATCC 43067 / DSM 2661 / JAL-1 / JCM 10045 / NBRC 100440) (Methanococcus jannaschii).